A 75-amino-acid polypeptide reads, in one-letter code: Small ribosomal subunit protein bS18 (75 aa).

The protein belongs to the bacterial ribosomal protein bS18 family. In terms of assembly, part of the 30S ribosomal subunit. Forms a tight heterodimer with protein bS6.

Binds as a heterodimer with protein bS6 to the central domain of the 16S rRNA, where it helps stabilize the platform of the 30S subunit. The chain is Small ribosomal subunit protein bS18 from Pectobacterium atrosepticum (strain SCRI 1043 / ATCC BAA-672) (Erwinia carotovora subsp. atroseptica).